Reading from the N-terminus, the 256-residue chain is UPF0246 protein Sbal_1048 (256 aa).

This sequence belongs to the UPF0246 family.

The protein is UPF0246 protein Sbal_1048 of Shewanella baltica (strain OS155 / ATCC BAA-1091).